A 329-amino-acid polypeptide reads, in one-letter code: uncharacterized protein (329 aa).

The Nudix hydrolase domain maps to 27–185 (PRRASVAVII…IQIDSSRALK (159 aa)). Transmembrane regions (helical) follow at residues 123–143 (VITS…VFIL), 227–247 (PFLR…LSPS), and 303–323 (LTLL…FLII).

It is found in the membrane. This is an uncharacterized protein from Schizosaccharomyces pombe (strain 972 / ATCC 24843) (Fission yeast).